Reading from the N-terminus, the 356-residue chain is Peptide methionine sulfoxide reductase MsrA/MsrB (356 aa).

The interval histidine 46 to glutamate 199 is peptide methionine sulfoxide reductase A. The active site involves cysteine 54. The MsrB domain occupies aspartate 216 to leucine 339. The active-site Nucleophile is cysteine 328.

This sequence in the N-terminal section; belongs to the MsrA Met sulfoxide reductase family. The protein in the C-terminal section; belongs to the MsrB Met sulfoxide reductase family.

It catalyses the reaction L-methionyl-[protein] + [thioredoxin]-disulfide + H2O = L-methionyl-(S)-S-oxide-[protein] + [thioredoxin]-dithiol. It carries out the reaction [thioredoxin]-disulfide + L-methionine + H2O = L-methionine (S)-S-oxide + [thioredoxin]-dithiol. The enzyme catalyses L-methionyl-[protein] + [thioredoxin]-disulfide + H2O = L-methionyl-(R)-S-oxide-[protein] + [thioredoxin]-dithiol. Functionally, has an important function as a repair enzyme for proteins that have been inactivated by oxidation. Catalyzes the reversible oxidation-reduction of methionine sulfoxide in proteins to methionine. This is Peptide methionine sulfoxide reductase MsrA/MsrB (msrAB) from Aggregatibacter actinomycetemcomitans (Actinobacillus actinomycetemcomitans).